The primary structure comprises 804 residues: Leucine--tRNA ligase (804 aa).

Positions 39–50 (PYPSGKGLHVGH) match the 'HIGH' region motif. The 'KMSKS' region motif lies at 573-577 (KMSKS). K576 serves as a coordination point for ATP.

The protein belongs to the class-I aminoacyl-tRNA synthetase family.

Its subcellular location is the cytoplasm. It carries out the reaction tRNA(Leu) + L-leucine + ATP = L-leucyl-tRNA(Leu) + AMP + diphosphate. In Lactobacillus delbrueckii subsp. bulgaricus (strain ATCC 11842 / DSM 20081 / BCRC 10696 / JCM 1002 / NBRC 13953 / NCIMB 11778 / NCTC 12712 / WDCM 00102 / Lb 14), this protein is Leucine--tRNA ligase.